The following is a 620-amino-acid chain: DNA mismatch repair protein MutL (620 aa).

A disordered region spans residues 353-375; it reads SRANGANDFTGRPFSGTERPRGG.

The protein belongs to the DNA mismatch repair MutL/HexB family.

Functionally, this protein is involved in the repair of mismatches in DNA. It is required for dam-dependent methyl-directed DNA mismatch repair. May act as a 'molecular matchmaker', a protein that promotes the formation of a stable complex between two or more DNA-binding proteins in an ATP-dependent manner without itself being part of a final effector complex. The protein is DNA mismatch repair protein MutL of Chelativorans sp. (strain BNC1).